Reading from the N-terminus, the 315-residue chain is uncharacterized protein (315 aa).

Residues 1 to 38 (MDVLLSLPQPELFKTTVIPFLANRNIIKSEAILSNLHS) lie on the Cytoplasmic side of the membrane. Residues 39–59 (IFYVAIFYHIWFLFGKWILFP) form a helical membrane-spanning segment. Residues 60–101 (HLVKWKLDYDQKHNVKKDEKTTSERQAQHYKKKYTSLINQSS) lie on the Lumenal side of the membrane. The TLC domain occupies 95–302 (SLINQSSVHL…MVSVAAKVLK (208 aa)). A helical transmembrane segment spans residues 102-122 (VHLISLLQSIVVLYYSLKFLL). Residues 123 to 144 (DPKASAEPYQTSHSRVFTENRD) lie on the Cytoplasmic side of the membrane. The helical transmembrane segment at 145–165 (TQVICIFAIGYFVWDIYISTM) threads the bilayer. Over 166–170 (YSTFP) the chain is Lumenal. A helical membrane pass occupies residues 171–190 (FVVHGIISTVVFCIGLKPYI). The Cytoplasmic segment spans residues 191-225 (QYYAPVFLMFELSNPSLNFRWFGIKFLPQKSKFCS). Residues 226–246 (LLLLLNNLTLMVVFFAARIAW) traverse the membrane as a helical segment. At 247-264 (GWFQIGKLCYDFYQVRNE) the chain is on the lumenal side. A helical membrane pass occupies residues 265 to 285 (PGFLVFDTIVILAGNFVLDIL). Topologically, residues 286-315 (NVIWFSTMVSVAAKVLKKGESVDKVTKNEQ) are cytoplasmic.

Its subcellular location is the endoplasmic reticulum membrane. This is an uncharacterized protein from Saccharomyces cerevisiae (strain ATCC 204508 / S288c) (Baker's yeast).